Here is a 106-residue protein sequence, read N- to C-terminus: Acylphosphatase-2 (106 aa).

The 91-residue stretch at 16–106 folds into the Acylphosphatase-like domain; it reads SVDYEVFGTV…LEYSDFSIRY (91 aa). Active-site residues include Arg-31 and Asn-49. The residue at position 100 (Ser-100) is a Phosphoserine.

Belongs to the acylphosphatase family.

The catalysed reaction is an acyl phosphate + H2O = a carboxylate + phosphate + H(+). The sequence is that of Acylphosphatase-2 (Acyp2) from Mus musculus (Mouse).